The following is a 120-amino-acid chain: Ribosome-binding factor A (120 aa).

Belongs to the RbfA family. As to quaternary structure, monomer. Binds 30S ribosomal subunits, but not 50S ribosomal subunits or 70S ribosomes.

It localises to the cytoplasm. Functionally, one of several proteins that assist in the late maturation steps of the functional core of the 30S ribosomal subunit. Associates with free 30S ribosomal subunits (but not with 30S subunits that are part of 70S ribosomes or polysomes). Required for efficient processing of 16S rRNA. May interact with the 5'-terminal helix region of 16S rRNA. The polypeptide is Ribosome-binding factor A (Rickettsia conorii (strain ATCC VR-613 / Malish 7)).